The sequence spans 477 residues: Mannitol 2-dehydrogenase (477 aa).

19–30 contacts NAD(+); it reads IVHIGVGNFHRA.

This sequence belongs to the mannitol dehydrogenase family. Monomer.

The catalysed reaction is D-mannitol + NAD(+) = D-fructose + NADH + H(+). The chain is Mannitol 2-dehydrogenase (mtlK) from Cereibacter sphaeroides (Rhodobacter sphaeroides).